A 394-amino-acid chain; its full sequence is Probable peptidoglycan glycosyltransferase FtsW (394 aa).

At 1 to 26 (MNTMRPRHLNQRGKPVSRPISLYDKW) the chain is on the cytoplasmic side. A helical transmembrane segment spans residues 27-47 (LIGAVFGLLIIGLMMVASSSV). Over 48 to 57 (MISTKYFHQP) the chain is Periplasmic. The chain crosses the membrane as a helical span at residues 58–78 (FHFLIRQACYLFVGLLLALIV). The Cytoplasmic segment spans residues 79–88 (VRTDSSFWEK). The chain crosses the membrane as a helical span at residues 89 to 109 (ISMPMMIGCVFLLLIVLIPGI). The Periplasmic segment spans residues 110 to 118 (GKSVNGSRR). A helical transmembrane segment spans residues 119-139 (WLALGPIGVQVSELTKLAMIF). Residues 140-154 (YLSGYLVRQQEAVCE) are Cytoplasmic-facing. The helical transmembrane segment at 155–175 (SIFGFIKPMAILAVVSVLLLL) threads the bilayer. Residues 176–177 (EP) lie on the Periplasmic side of the membrane. The chain crosses the membrane as a helical span at residues 178–198 (DFGATVVISGTVMAMLFLAGV). The Cytoplasmic segment spans residues 199-201 (KLR). Residues 202–222 (YYFGLMLVVVTALALLAVSSP) form a helical membrane-spanning segment. Residues 223 to 278 (YRVARLTAFLDPWADQYNSGYQLTQSLIAFGRGGWFGTGLGESIQKLLYLPEAHTD) are Periplasmic-facing. The helical transmembrane segment at 279 to 299 (FLFAVIAEELGLFGILVVITL) threads the bilayer. Residues 300 to 327 (YSILVIRGLNIGYTAYTQERHFASYTAY) are Cytoplasmic-facing. The helical transmembrane segment at 328 to 348 (GLTIWLALQASINMGVNAGLL) threads the bilayer. At 349–354 (PTKGLT) the chain is on the periplasmic side. The chain crosses the membrane as a helical span at residues 355–375 (LPLLSYGGASMVINCIVIALL). The Cytoplasmic portion of the chain corresponds to 376–394 (LRIDHENRWQSLGLRPLTA).

This sequence belongs to the SEDS family. FtsW subfamily.

The protein resides in the cell inner membrane. It catalyses the reaction [GlcNAc-(1-&gt;4)-Mur2Ac(oyl-L-Ala-gamma-D-Glu-L-Lys-D-Ala-D-Ala)](n)-di-trans,octa-cis-undecaprenyl diphosphate + beta-D-GlcNAc-(1-&gt;4)-Mur2Ac(oyl-L-Ala-gamma-D-Glu-L-Lys-D-Ala-D-Ala)-di-trans,octa-cis-undecaprenyl diphosphate = [GlcNAc-(1-&gt;4)-Mur2Ac(oyl-L-Ala-gamma-D-Glu-L-Lys-D-Ala-D-Ala)](n+1)-di-trans,octa-cis-undecaprenyl diphosphate + di-trans,octa-cis-undecaprenyl diphosphate + H(+). It participates in cell wall biogenesis; peptidoglycan biosynthesis. Its function is as follows. Peptidoglycan polymerase that is essential for cell division. This is Probable peptidoglycan glycosyltransferase FtsW from Legionella pneumophila subsp. pneumophila (strain Philadelphia 1 / ATCC 33152 / DSM 7513).